We begin with the raw amino-acid sequence, 119 residues long: T cell receptor alpha variable 29/delta variable 5 (119 aa).

The first 21 residues, 1–21, serve as a signal peptide directing secretion; the sequence is MAMLLGASVLILWLQPDWVNS. The region spanning 22-119 is the Ig-like domain; the sequence is QQKNDDQQVK…DSAVYFCAAS (98 aa). Residues Cys-49 and Cys-116 are joined by a disulfide bond. Asn-93 carries an N-linked (GlcNAc...) asparagine glycan.

In terms of assembly, alpha-beta TR is a heterodimer composed of an alpha and beta chain; disulfide-linked. The alpha-beta TR is associated with the transmembrane signaling CD3 coreceptor proteins to form the TR-CD3 (TcR or TCR). The assembly of alpha-beta TR heterodimers with CD3 occurs in the endoplasmic reticulum where a single alpha-beta TR heterodimer associates with one CD3D-CD3E heterodimer, one CD3G-CD3E heterodimer and one CD247 homodimer forming a stable octameric structure. CD3D-CD3E and CD3G-CD3E heterodimers preferentially associate with TR alpha and TR beta chains, respectively. The association of the CD247 homodimer is the last step of TcR assembly in the endoplasmic reticulum and is required for transport to the cell surface.

The protein localises to the cell membrane. In terms of biological role, v region of the variable domain of T cell receptor (TR) alpha chain that participates in the antigen recognition. Alpha-beta T cell receptors are antigen specific receptors which are essential to the immune response and are present on the cell surface of T lymphocytes. Recognize peptide-major histocompatibility (MH) (pMH) complexes that are displayed by antigen presenting cells (APC), a prerequisite for efficient T cell adaptive immunity against pathogens. Binding of alpha-beta TR to pMH complex initiates TR-CD3 clustering on the cell surface and intracellular activation of LCK that phosphorylates the ITAM motifs of CD3G, CD3D, CD3E and CD247 enabling the recruitment of ZAP70. In turn ZAP70 phosphorylates LAT, which recruits numerous signaling molecules to form the LAT signalosome. The LAT signalosome propagates signal branching to three major signaling pathways, the calcium, the mitogen-activated protein kinase (MAPK) kinase and the nuclear factor NF-kappa-B (NF-kB) pathways, leading to the mobilization of transcription factors that are critical for gene expression and essential for T cell growth and differentiation. The T cell repertoire is generated in the thymus, by V-(D)-J rearrangement. This repertoire is then shaped by intrathymic selection events to generate a peripheral T cell pool of self-MH restricted, non-autoaggressive T cells. Post-thymic interaction of alpha-beta TR with the pMH complexes shapes TR structural and functional avidity. The chain is T cell receptor alpha variable 29/delta variable 5 from Homo sapiens (Human).